Reading from the N-terminus, the 525-residue chain is ATP synthase subunit alpha (525 aa).

169-176 (GDRQTGKT) serves as a coordination point for ATP.

It belongs to the ATPase alpha/beta chains family. In terms of assembly, F-type ATPases have 2 components, CF(1) - the catalytic core - and CF(0) - the membrane proton channel. CF(1) has five subunits: alpha(3), beta(3), gamma(1), delta(1), epsilon(1). CF(0) has three main subunits: a(1), b(2) and c(9-12). The alpha and beta chains form an alternating ring which encloses part of the gamma chain. CF(1) is attached to CF(0) by a central stalk formed by the gamma and epsilon chains, while a peripheral stalk is formed by the delta and b chains.

It localises to the cell membrane. The catalysed reaction is ATP + H2O + 4 H(+)(in) = ADP + phosphate + 5 H(+)(out). In terms of biological role, produces ATP from ADP in the presence of a proton gradient across the membrane. The alpha chain is a regulatory subunit. This is ATP synthase subunit alpha from Mycoplasma capricolum subsp. capricolum (strain California kid / ATCC 27343 / NCTC 10154).